The sequence spans 147 residues: Putative pre-16S rRNA nuclease (147 aa).

Belongs to the YqgF nuclease family.

The protein resides in the cytoplasm. Its function is as follows. Could be a nuclease involved in processing of the 5'-end of pre-16S rRNA. In Ureaplasma parvum serovar 3 (strain ATCC 27815 / 27 / NCTC 11736), this protein is Putative pre-16S rRNA nuclease.